The following is a 323-amino-acid chain: Ferrochelatase (323 aa).

Fe cation contacts are provided by histidine 196 and glutamate 277.

It belongs to the ferrochelatase family.

The protein resides in the cytoplasm. The catalysed reaction is heme b + 2 H(+) = protoporphyrin IX + Fe(2+). It functions in the pathway porphyrin-containing compound metabolism; protoheme biosynthesis; protoheme from protoporphyrin-IX: step 1/1. Catalyzes the ferrous insertion into protoporphyrin IX. The protein is Ferrochelatase of Haemophilus influenzae (strain 86-028NP).